We begin with the raw amino-acid sequence, 256 residues long: MLNIGPFTFKSRLLLGTGKFSDYDVQRKAIEVSEAEILTFAVRRMDIFDAQQPNLLEKIDIKNYTLLPNTAGAKTAEEAVRIAKLAKASGLCDMVKVEVIGDDKTLLPDPVETLKASEMLLEEGFIVLPYTSDDVVLARKLQELGVHAIMPGASPIGSGLGIVNPLNISFIIEQATVPVIVDAGVGSPADAAFAMELGADGVLLNTAVSGAKDPIKMAEAMKLGIHAGRLGFEAGRIARKRFATASSPLEGMSVVE.

Lys96 acts as the Schiff-base intermediate with DXP in catalysis. 1-deoxy-D-xylulose 5-phosphate-binding positions include Gly157, 183–184 (AG), and 205–206 (NT).

This sequence belongs to the ThiG family. As to quaternary structure, homotetramer. Forms heterodimers with either ThiH or ThiS.

It localises to the cytoplasm. The enzyme catalyses [ThiS sulfur-carrier protein]-C-terminal-Gly-aminoethanethioate + 2-iminoacetate + 1-deoxy-D-xylulose 5-phosphate = [ThiS sulfur-carrier protein]-C-terminal Gly-Gly + 2-[(2R,5Z)-2-carboxy-4-methylthiazol-5(2H)-ylidene]ethyl phosphate + 2 H2O + H(+). The protein operates within cofactor biosynthesis; thiamine diphosphate biosynthesis. In terms of biological role, catalyzes the rearrangement of 1-deoxy-D-xylulose 5-phosphate (DXP) to produce the thiazole phosphate moiety of thiamine. Sulfur is provided by the thiocarboxylate moiety of the carrier protein ThiS. In vitro, sulfur can be provided by H(2)S. This is Thiazole synthase from Bacillus cytotoxicus (strain DSM 22905 / CIP 110041 / 391-98 / NVH 391-98).